We begin with the raw amino-acid sequence, 126 residues long: Protein LiaI (126 aa).

Transmembrane regions (helical) follow at residues 11 to 31 (FLLI…GFII) and 56 to 76 (IIVG…VVGI).

It is found in the cell membrane. The polypeptide is Protein LiaI (liaI) (Bacillus subtilis (strain 168)).